The sequence spans 209 residues: Uracil phosphoribosyltransferase (209 aa).

5-phospho-alpha-D-ribose 1-diphosphate contacts are provided by residues R79, R104, and 131-139 (DPMLATGGS). Uracil is bound by residues I194 and 199–201 (GDA). D200 contributes to the 5-phospho-alpha-D-ribose 1-diphosphate binding site.

The protein belongs to the UPRTase family. Mg(2+) is required as a cofactor.

It catalyses the reaction UMP + diphosphate = 5-phospho-alpha-D-ribose 1-diphosphate + uracil. It functions in the pathway pyrimidine metabolism; UMP biosynthesis via salvage pathway; UMP from uracil: step 1/1. With respect to regulation, allosterically activated by GTP. In terms of biological role, catalyzes the conversion of uracil and 5-phospho-alpha-D-ribose 1-diphosphate (PRPP) to UMP and diphosphate. In Levilactobacillus brevis (strain ATCC 367 / BCRC 12310 / CIP 105137 / JCM 1170 / LMG 11437 / NCIMB 947 / NCTC 947) (Lactobacillus brevis), this protein is Uracil phosphoribosyltransferase.